Here is a 274-residue protein sequence, read N- to C-terminus: Penicillin-insensitive murein endopeptidase (274 aa).

A signal peptide spans Met-1–Ala-19. Cystine bridges form between Cys-44–Cys-265, Cys-187–Cys-235, and Cys-216–Cys-223. Positions 110, 113, 120, 147, 150, and 211 each coordinate Zn(2+). The segment at Leu-228–Ser-264 is disordered.

It belongs to the peptidase M74 family. In terms of assembly, dimer. The cofactor is Zn(2+).

It is found in the periplasm. Its function is as follows. Murein endopeptidase that cleaves the D-alanyl-meso-2,6-diamino-pimelyl amide bond that connects peptidoglycan strands. Likely plays a role in the removal of murein from the sacculus. The sequence is that of Penicillin-insensitive murein endopeptidase from Escherichia coli (strain 55989 / EAEC).